The following is a 1121-amino-acid chain: Ataxin-2 homolog (1121 aa).

Positions 1–10 (MNNNSKRKTR) are enriched in basic residues. The segment at 1–53 (MNNNSKRKTRPSGGGGGGGASGGISRYNANDNSLRPANNKSGAAGNSAGAGAG) is disordered. Residues 12-22 (SGGGGGGGASG) are compositionally biased toward gly residues. A compositionally biased stretch (polar residues) spans 27–36 (YNANDNSLRP). A compositionally biased stretch (low complexity) spans 37–47 (ANNKSGAAGNS). The Sm domain occupies 71-146 (FFMHSATALV…VVKIVAKDFD (76 aa)). Phosphoserine occurs at positions 219 and 232. 4 disordered regions span residues 270–376 (FAAV…GQGG), 422–458 (GKVM…GGYQ), 476–935 (MHGS…TTGT), and 1039–1076 (QTPQ…TPPT). The segment covering 274–310 (ERPEQDHRRDGDRERERNDRDREREERDRDRDRDRGN) has biased composition (basic and acidic residues). Over residues 323–347 (ETMSSDRYITKQTRGPQMSHVSMSS) the composition is skewed to polar residues. Gly residues-rich tracts occupy residues 367 to 376 (ISGGGAGQGG) and 434 to 448 (SGGG…GNGN). Composition is skewed to polar residues over residues 476-487 (MHGSSQYRNPSH) and 499-524 (ANAN…NSLN). Composition is skewed to low complexity over residues 552 to 596 (PPLQ…PQRQ), 623 to 684 (PPQQ…MQHQ), 697 to 711 (QPHY…QPQP), and 720 to 773 (QQQQ…APEP). Positions 774–789 (SQQPLPLYHPMPPPQT) are enriched in pro residues. Low complexity-rich tracts occupy residues 807–825 (ILTA…TPKP) and 835–890 (TTTP…STPV). 2 stretches are compositionally biased toward pro residues: residues 914-926 (PSRP…PVPM) and 1048-1062 (PGQP…PQPS).

This sequence belongs to the ataxin-2 family.

It is found in the cytoplasm. Its function is as follows. Regulator of actin filament formation, though it does not directly assemble with actin filaments. Required for oocyte specification and oocyte positioning in the female germline. Also required for normal eye development and bristle morphology. The protein is Ataxin-2 homolog of Drosophila pseudoobscura pseudoobscura (Fruit fly).